A 187-amino-acid polypeptide reads, in one-letter code: UPF0200 protein APE_1753.1 (187 aa).

Residue 13 to 20 (GLPGSGKS) participates in ATP binding.

Belongs to the UPF0200 family.

The polypeptide is UPF0200 protein APE_1753.1 (Aeropyrum pernix (strain ATCC 700893 / DSM 11879 / JCM 9820 / NBRC 100138 / K1)).